The primary structure comprises 257 residues: Transcription factor MYB3 (257 aa).

HTH myb-type domains follow at residues 9-61 (KAHM…MNYL) and 62-116 (RPDL…KRKL). 2 consecutive DNA-binding regions (H-T-H motif) follow at residues 37-61 (WRSL…MNYL) and 89-112 (WSLI…NTHI). Positions 189–193 (LNLEL) match the Required for interaction with CPL1 motif.

As to quaternary structure, interacts with CPL1. Expressed in roots, stems, leaves, flowers and siliques.

The protein localises to the nucleus. This is Transcription factor MYB3 (MYB3) from Arabidopsis thaliana (Mouse-ear cress).